Here is a 450-residue protein sequence, read N- to C-terminus: Solute carrier family 52, riboflavin transporter, member 2 (450 aa).

The next 5 helical transmembrane spans lie at 14 to 34 (LLVA…WVEL), 47 to 67 (LPSY…LVTL), 79 to 99 (IPIQ…APLW), 114 to 136 (FLTL…LPFL), and 147 to 167 (FFLG…AQGV). The N-linked (GlcNAc...) asparagine glycan is linked to N178. A helical transmembrane segment spans residues 201–221 (FFWVLTALLGTSAAAFQGLLL). Residues 230–268 (ATMGTGLRVETPGTEEEEEEEEASPLQEPPGQVASIVSS) form a disordered region. Acidic residues predominate over residues 242 to 252 (GTEEEEEEEEA). Helical transmembrane passes span 282–302 (ACLL…LPAV), 317–337 (LAVV…MAVL), 344–364 (LYGL…LAVL), 371–391 (VGTS…AGVF), and 409–429 (ALLA…IAMF).

This sequence belongs to the riboflavin transporter family. As to expression, highly expressed in the placenta and small intestine, moderately in the kidney, colon, lung, prostate, uterus, and thymus, and weakly in all other tissues.

Its subcellular location is the cell membrane. It carries out the reaction riboflavin(in) = riboflavin(out). Its activity is regulated as follows. Riboflavin transport is Na(+)-independent but moderately pH-sensitive. Activity is strongly inhibited by riboflavin analogs, such as lumiflavin. Weakly inhibited by flavin adenine dinucleotide (FAD) and flavin mononucleotide (FMN). In terms of biological role, plasma membrane transporter mediating the uptake by cells of the water soluble vitamin B2/riboflavin that plays a key role in biochemical oxidation-reduction reactions of the carbohydrate, lipid, and amino acid metabolism. May also act as a receptor for 4-hydroxybutyrate. This Rattus norvegicus (Rat) protein is Solute carrier family 52, riboflavin transporter, member 2 (Slc52a2).